The chain runs to 417 residues: Protein FAM181B (417 aa).

The disordered stretch occupies residues 104–147 (CSGLMGTAPPRPASPSAADAPAKRPPGAPTVATPAHCKAAPRRE).

The protein belongs to the FAM181 family.

This is Protein FAM181B (Fam181b) from Mus musculus (Mouse).